We begin with the raw amino-acid sequence, 461 residues long: Carboxypeptidase Rv3627c (461 aa).

The N-terminal stretch at Met-1–Ala-28 is a signal peptide. Ser-114 serves as the catalytic Acyl-ester intermediate. Lys-117 serves as the catalytic Proton acceptor. Ser-295 is an active-site residue.

The protein belongs to the peptidase S13 family.

In terms of biological role, carboxypeptidase that cleaves terminal D-alanine from peptidoglycan in the mycobacterial cell wall. May cleave L-Lys-D-Ala and/or D-Ala-D-Ala peptide bonds. Exerts important effects on mycobacterial cell morphology and cell division. This chain is Carboxypeptidase Rv3627c, found in Mycobacterium tuberculosis (strain ATCC 25618 / H37Rv).